The primary structure comprises 494 residues: Cobyric acid synthase (494 aa).

The GATase cobBQ-type domain maps to 248-445 (ELEIAVLKLP…LHGIFDNGPW (198 aa)). The Nucleophile role is filled by Cys-329. Residue His-437 is part of the active site.

The protein belongs to the CobB/CobQ family. CobQ subfamily.

Its pathway is cofactor biosynthesis; adenosylcobalamin biosynthesis. Its function is as follows. Catalyzes amidations at positions B, D, E, and G on adenosylcobyrinic A,C-diamide. NH(2) groups are provided by glutamine, and one molecule of ATP is hydrogenolyzed for each amidation. The sequence is that of Cobyric acid synthase from Synechococcus sp. (strain WH7803).